The primary structure comprises 1110 residues: Nitric oxide synthase 3 (1110 aa).

The tract at residues 1-74 (MGNFKSVGQE…PPEGPKFPRV (74 aa)) is disordered. The segment covering 15–27 (CGLGLGLGLGLCG) has biased composition (gly residues). The segment covering 31–40 (PASPAPVSAS) has biased composition (low complexity). The segment covering 47 to 69 (SSPPLPLPAPEHSPPLTRPPEGP) has biased composition (pro residues). Cys-97 and Cys-102 together coordinate Zn(2+). The interval 101-489 (RCLGSLVFPR…PDPWKGSGTK (389 aa)) is interaction with NOSIP. (6R)-L-erythro-5,6,7,8-tetrahydrobiopterin is bound at residue Ser-105. A Phosphoserine modification is found at Ser-117. Cys-187 contributes to the heme b binding site. L-arginine contacts are provided by Gln-250, Trp-359, Tyr-360, and Glu-364. Arg-368 provides a ligand contact to (6R)-L-erythro-5,6,7,8-tetrahydrobiopterin. Asn-369 serves as a coordination point for L-arginine. (6R)-L-erythro-5,6,7,8-tetrahydrobiopterin contacts are provided by Ala-449, Trp-450, and Phe-463. Heme b is bound at residue Tyr-478. Phosphothreonine is present on Thr-498. Residues Ser-529, Glu-530, Thr-531, Arg-533, Ser-575, and Thr-576 each contribute to the FMN site. A phosphoserine mark is found at Ser-618, Ser-636, and Ser-641. FMN is bound by residues Ser-657, Cys-664, Glu-690, and Gln-694. NADP(+) is bound at residue Arg-779. FAD is bound at residue His-801. Residues 821 to 848 (EDPPPPAESVAVEQLEKGSPGGPPPGWV) are disordered. Ser-839 is subject to Phosphoserine. The FAD site is built by Arg-941, Tyr-943, Ser-944, Thr-959, Ala-961, Tyr-965, Val-978, Cys-979, and Ser-980. Residues Thr-1019, Arg-1052, Ser-1081, Arg-1082, and Lys-1088 each contribute to the NADP(+) site.

It belongs to the NOS family. Homodimer. Interacts with NOSIP and NOSTRIN. Interacts with HSP90AB1. Forms a complex with ASL, ASS1 and SLC7A1; the complex regulates cell-autonomous L-arginine synthesis and citrulline recycling while channeling extracellular L-arginine to nitric oxide synthesis pathway. Heme b is required as a cofactor. It depends on FAD as a cofactor. Requires FMN as cofactor. The cofactor is (6R)-L-erythro-5,6,7,8-tetrahydrobiopterin.

It is found in the membrane. Its subcellular location is the caveola. The protein localises to the cytoplasm. It localises to the cytoskeleton. The protein resides in the golgi apparatus. It is found in the cell membrane. The enzyme catalyses 2 L-arginine + 3 NADPH + 4 O2 + H(+) = 2 L-citrulline + 2 nitric oxide + 3 NADP(+) + 4 H2O. Its activity is regulated as follows. Stimulated by calcium/calmodulin. Inhibited by NOSIP and NOSTRIN. Its function is as follows. Produces nitric oxide (NO) which is implicated in vascular smooth muscle relaxation through a cGMP-mediated signal transduction pathway. NO mediates vascular endothelial growth factor (VEGF)-induced angiogenesis in coronary vessels and promotes blood clotting through the activation of platelets. The polypeptide is Nitric oxide synthase 3 (NOS3) (Cavia porcellus (Guinea pig)).